A 301-amino-acid polypeptide reads, in one-letter code: Glycine--tRNA ligase alpha subunit (301 aa).

Belongs to the class-II aminoacyl-tRNA synthetase family. In terms of assembly, tetramer of two alpha and two beta subunits.

Its subcellular location is the cytoplasm. The catalysed reaction is tRNA(Gly) + glycine + ATP = glycyl-tRNA(Gly) + AMP + diphosphate. This is Glycine--tRNA ligase alpha subunit from Neisseria meningitidis serogroup C (strain 053442).